Here is a 280-residue protein sequence, read N- to C-terminus: Protoheme IX farnesyltransferase (280 aa).

Helical transmembrane passes span 2 to 21 (VVAT…RAGL), 30 to 50 (AAVP…VVSG), 83 to 103 (LALW…LVGV), 105 to 125 (ATTG…YTPL), 131 to 151 (LSLP…WTSV), 160 to 180 (FLLF…ISLF), 206 to 226 (IVGY…LGVA), 229 to 249 (VYLG…VYGL), and 260 to 280 (QVFF…MIGA).

Belongs to the UbiA prenyltransferase family. Protoheme IX farnesyltransferase subfamily.

The protein resides in the cell inner membrane. It catalyses the reaction heme b + (2E,6E)-farnesyl diphosphate + H2O = Fe(II)-heme o + diphosphate. It functions in the pathway porphyrin-containing compound metabolism; heme O biosynthesis; heme O from protoheme: step 1/1. Functionally, converts heme B (protoheme IX) to heme O by substitution of the vinyl group on carbon 2 of heme B porphyrin ring with a hydroxyethyl farnesyl side group. The sequence is that of Protoheme IX farnesyltransferase from Sorangium cellulosum (strain So ce56) (Polyangium cellulosum (strain So ce56)).